The primary structure comprises 320 residues: MLNTTSVTEFLLLGVTDIQELQPFLFVVFLTIYFISVAGNGAILMIVISDPRLHSPMYFFLGNLSCLDICYSSVTLPKMLQNFLSAHKAISFLGCISQLHFFHFLGSTEAMLLAVMAFDRFVAICKPLRYTVIMNPQLCTQMAITIWMIGFFHALLHSLMTSRLNFCGSNRIYHFFCDVKPLLKLACGNTELNQWLLSTVTGTIAMGPFFLTLLSYFYIITHLFFKTHSFSMLRKALSTCASHFMVVILLYAPVLFTYIHHASGTSMDQDRITAIMYTVVTPVLNPLIYTLRNKEVKGAFNRAMKRWLWPKEILKNSSEA.

The Extracellular segment spans residues 1–23 (MLNTTSVTEFLLLGVTDIQELQP). An N-linked (GlcNAc...) asparagine glycan is attached at asparagine 3. Residues 24–44 (FLFVVFLTIYFISVAGNGAIL) form a helical membrane-spanning segment. The Cytoplasmic segment spans residues 45 to 55 (MIVISDPRLHS). A helical transmembrane segment spans residues 56 to 76 (PMYFFLGNLSCLDICYSSVTL). Topologically, residues 77-97 (PKMLQNFLSAHKAISFLGCIS) are extracellular. Cysteine 95 and cysteine 177 are joined by a disulfide. A helical membrane pass occupies residues 98-118 (QLHFFHFLGSTEAMLLAVMAF). The Cytoplasmic segment spans residues 119–141 (DRFVAICKPLRYTVIMNPQLCTQ). Residues 142 to 162 (MAITIWMIGFFHALLHSLMTS) form a helical membrane-spanning segment. Topologically, residues 163–203 (RLNFCGSNRIYHFFCDVKPLLKLACGNTELNQWLLSTVTGT) are extracellular. The chain crosses the membrane as a helical span at residues 204–224 (IAMGPFFLTLLSYFYIITHLF). The Cytoplasmic segment spans residues 225–238 (FKTHSFSMLRKALS). The chain crosses the membrane as a helical span at residues 239–259 (TCASHFMVVILLYAPVLFTYI). The Extracellular portion of the chain corresponds to 260–270 (HHASGTSMDQD). A helical transmembrane segment spans residues 271–291 (RITAIMYTVVTPVLNPLIYTL). Residues 292–320 (RNKEVKGAFNRAMKRWLWPKEILKNSSEA) are Cytoplasmic-facing.

Belongs to the G-protein coupled receptor 1 family.

The protein localises to the cell membrane. Functionally, odorant receptor. This Homo sapiens (Human) protein is Olfactory receptor 12D1 (OR12D1).